Consider the following 628-residue polypeptide: ATP-dependent zinc metalloprotease FtsH 4 (628 aa).

Over 1–14 (MAIKPQPQWQRRLA) the chain is Cytoplasmic. The helical transmembrane segment at 15–35 (SVLLWGSTIYLLVNLLAPALF) threads the bilayer. Topologically, residues 36–119 (RSQPPQVPYS…AAAPPAKNSW (84 aa)) are lumenal. A helical membrane pass occupies residues 120–140 (FGTLLSWVIPPLIFVGIWSFF). The Cytoplasmic segment spans residues 141–628 (LNRNNNGAPG…QVQAPGTLVV (488 aa)). An ATP-binding site is contributed by 214 to 221 (GPPGTGKT). Histidine 438 is a Zn(2+) binding site. The active site involves glutamate 439. Residues histidine 442 and aspartate 515 each coordinate Zn(2+).

The protein in the central section; belongs to the AAA ATPase family. This sequence in the C-terminal section; belongs to the peptidase M41 family. Homohexamer. Zn(2+) is required as a cofactor.

It localises to the cellular thylakoid membrane. Functionally, acts as a processive, ATP-dependent zinc metallopeptidase for both cytoplasmic and membrane proteins. Plays a role in the quality control of integral membrane proteins. This Synechocystis sp. (strain ATCC 27184 / PCC 6803 / Kazusa) protein is ATP-dependent zinc metalloprotease FtsH 4.